A 475-amino-acid polypeptide reads, in one-letter code: Bifunctional aspartate aminotransferase and glutamate/aspartate-prephenate aminotransferase (475 aa).

Residues 1-55 (MASQSSVAVISSAAARGESFPDSKKPIGSVRFQQPLRLSFSYCKSGNMSSRICAM) constitute a chloroplast transit peptide. 3 residues coordinate L-aspartate: Gly107, Trp193, and Asn243. At Lys306 the chain carries N6-(pyridoxal phosphate)lysine. Residue Arg445 participates in L-aspartate binding.

It belongs to the class-I pyridoxal-phosphate-dependent aminotransferase family. In terms of assembly, homodimer. Pyridoxal 5'-phosphate is required as a cofactor.

It localises to the plastid. It is found in the chloroplast. It carries out the reaction L-aspartate + 2-oxoglutarate = oxaloacetate + L-glutamate. It catalyses the reaction L-arogenate + oxaloacetate = prephenate + L-aspartate. The catalysed reaction is L-arogenate + 2-oxoglutarate = prephenate + L-glutamate. It functions in the pathway amino-acid biosynthesis; L-phenylalanine biosynthesis; L-arogenate from prephenate (L-Asp route): step 1/1. The protein operates within amino-acid biosynthesis; L-phenylalanine biosynthesis; L-arogenate from prephenate (L-Glu route): step 1/1. In terms of biological role, prokaryotic-type aspartate aminotransferase. Also has a prenate transaminase activity. Involved in the aromatic amino acids biosynthesis pathway via the arogenate route. Required for the transamination of prephenate into arogenate. Required for early development of the embryo. The sequence is that of Bifunctional aspartate aminotransferase and glutamate/aspartate-prephenate aminotransferase (PAT) from Arabidopsis thaliana (Mouse-ear cress).